The following is a 494-amino-acid chain: Glutamyl-tRNA(Gln) amidotransferase subunit A (494 aa).

Residues Lys-81 and Ser-156 each act as charge relay system in the active site. Residue Ser-180 is the Acyl-ester intermediate of the active site.

This sequence belongs to the amidase family. GatA subfamily. In terms of assembly, heterotrimer of A, B and C subunits.

The catalysed reaction is L-glutamyl-tRNA(Gln) + L-glutamine + ATP + H2O = L-glutaminyl-tRNA(Gln) + L-glutamate + ADP + phosphate + H(+). Allows the formation of correctly charged Gln-tRNA(Gln) through the transamidation of misacylated Glu-tRNA(Gln) in organisms which lack glutaminyl-tRNA synthetase. The reaction takes place in the presence of glutamine and ATP through an activated gamma-phospho-Glu-tRNA(Gln). This is Glutamyl-tRNA(Gln) amidotransferase subunit A from Mycolicibacterium gilvum (strain PYR-GCK) (Mycobacterium gilvum (strain PYR-GCK)).